Reading from the N-terminus, the 891-residue chain is Alanine--tRNA ligase (891 aa).

Histidine 574, histidine 578, cysteine 676, and histidine 680 together coordinate Zn(2+).

It belongs to the class-II aminoacyl-tRNA synthetase family. Requires Zn(2+) as cofactor.

It is found in the cytoplasm. It catalyses the reaction tRNA(Ala) + L-alanine + ATP = L-alanyl-tRNA(Ala) + AMP + diphosphate. Functionally, catalyzes the attachment of alanine to tRNA(Ala) in a two-step reaction: alanine is first activated by ATP to form Ala-AMP and then transferred to the acceptor end of tRNA(Ala). Also edits incorrectly charged Ser-tRNA(Ala) and Gly-tRNA(Ala) via its editing domain. In Synechococcus sp. (strain WH7803), this protein is Alanine--tRNA ligase.